The following is a 272-amino-acid chain: B3 domain-containing protein Os10g0323000 (272 aa).

Residues 39-132 constitute a DNA-binding region (TF-B3 1); that stretch reads RYGENRKHGQ…TLDLLILDKH (94 aa). A disordered region spans residues 139–171; that stretch reads PPSKRDLKLKSKRSTHQDSKGHPSNTDPGPSRI. The segment covering 141–159 has biased composition (basic and acidic residues); sequence SKRDLKLKSKRSTHQDSKG. The TF-B3 2 DNA-binding region spans 180–272; the sequence is ESSANTQLLV…THLGVIVDIF (93 aa).

The protein localises to the nucleus. This Oryza sativa subsp. japonica (Rice) protein is B3 domain-containing protein Os10g0323000.